The sequence spans 1398 residues: DNA topoisomerase 2 (1398 aa).

Residues N69, N103, 131–133 (SDN), and 144–151 (GRNGFGAK) contribute to the ATP site. The disordered stretch occupies residues 260–317 (NSNDNKNNKGQNDNNNNNNNNNDENANQNNDNLDVSLSNEPADGTPTKNNNNNNNNND). Residues 267-291 (NKGQNDNNNNNNNNNDENANQNNDN) show a composition bias toward low complexity. 411-413 (QTK) is a binding site for ATP. Residues 493–608 (CTLILTEGDS…SLLKHKGFLS (116 aa)) enclose the Toprim domain. Positions 499, 577, and 579 each coordinate Mg(2+). A Topo IIA-type catalytic domain is found at 739–1191 (IPNIMDGWKP…TVETMWLKDI (453 aa)). Y830 serves as the catalytic O-(5'-phospho-DNA)-tyrosine intermediate. Residues 1012-1021 (KLKSTLTTTN) form an interaction with DNA region. 2 disordered regions span residues 1214–1250 (KFKV…SDSS) and 1262–1361 (NTNK…NSSI). Low complexity predominate over residues 1262–1276 (NTNKKTTTSSNNVNN). Polar residues-rich tracts occupy residues 1287 to 1300 (LNSN…SVSK) and 1348 to 1357 (DSTNDNNSEL).

It belongs to the type II topoisomerase family. As to quaternary structure, homodimer. Mg(2+) is required as a cofactor. Requires Mn(2+) as cofactor. Ca(2+) serves as cofactor.

It localises to the nucleus. The enzyme catalyses ATP-dependent breakage, passage and rejoining of double-stranded DNA.. In terms of biological role, control of topological states of DNA by transient breakage and subsequent rejoining of DNA strands. Topoisomerase II makes double-strand breaks. In Plasmodium falciparum (isolate K1 / Thailand), this protein is DNA topoisomerase 2 (TOP2).